A 446-amino-acid polypeptide reads, in one-letter code: G patch domain-containing protein 4 (446 aa).

Methionine 1 is subject to N-acetylmethionine. Threonine 4 bears the Phosphothreonine mark. The G-patch domain maps to 11–57; sequence GMKFAEEQLLKHGWTQGKGLGRKENGITQALRVTLKQDTHGVGHDPA. Lysine 46 is covalently cross-linked (Glycyl lysine isopeptide (Lys-Gly) (interchain with G-Cter in SUMO2)). Residue threonine 116 is modified to Phosphothreonine. 2 disordered regions span residues 116–140 and 188–446; these read TSGG…SKSP and QDPG…KKRD. Residues serine 128, serine 130, and serine 139 each carry the phosphoserine modification. Residues 166 to 251 are a coiled coil; the sequence is TMKAKLARLE…KKKRRHQEGK (86 aa). Residues 219–237 show a composition bias toward basic and acidic residues; sequence ASERNDADEKHPEHAEQNI. Positions 238 to 248 are enriched in basic residues; it reads RKSKKKKRRHQ. Composition is skewed to basic and acidic residues over residues 249-268, 297-328, 363-375, and 392-409; these read EGKV…KEDA, HHEE…ESRA, REAE…DGRS, and LDVR…ESRA. Basic residues-rich tracts occupy residues 416–427 and 437–446; these read RGKRKRQQHPKK and KAKKKQKKRD.

The sequence is that of G patch domain-containing protein 4 (GPATCH4) from Homo sapiens (Human).